Consider the following 398-residue polypeptide: 1-deoxy-D-xylulose 5-phosphate reductoisomerase (398 aa).

NADPH contacts are provided by T11, G12, S13, I14, R38, N39, and N125. A 1-deoxy-D-xylulose 5-phosphate-binding site is contributed by K126. Residue E127 coordinates NADPH. D151 serves as a coordination point for Mn(2+). 1-deoxy-D-xylulose 5-phosphate contacts are provided by S152, E153, S179, and H202. Residue E153 coordinates Mn(2+). G208 serves as a coordination point for NADPH. S215, N220, K221, and E224 together coordinate 1-deoxy-D-xylulose 5-phosphate. E224 serves as a coordination point for Mn(2+).

Belongs to the DXR family. The cofactor is Mg(2+). Mn(2+) is required as a cofactor.

The catalysed reaction is 2-C-methyl-D-erythritol 4-phosphate + NADP(+) = 1-deoxy-D-xylulose 5-phosphate + NADPH + H(+). The protein operates within isoprenoid biosynthesis; isopentenyl diphosphate biosynthesis via DXP pathway; isopentenyl diphosphate from 1-deoxy-D-xylulose 5-phosphate: step 1/6. Catalyzes the NADPH-dependent rearrangement and reduction of 1-deoxy-D-xylulose-5-phosphate (DXP) to 2-C-methyl-D-erythritol 4-phosphate (MEP). The sequence is that of 1-deoxy-D-xylulose 5-phosphate reductoisomerase from Burkholderia mallei (strain NCTC 10247).